A 325-amino-acid chain; its full sequence is Protease HtpX homolog 2 (325 aa).

The next 2 membrane-spanning stretches (helical) occupy residues 10 to 30 and 41 to 61; these read LNMA…ALAV and VGLI…QWLF. His-147 contacts Zn(2+). The active site involves Glu-148. His-151 is a Zn(2+) binding site. The next 2 helical transmembrane spans lie at 159-179 and 196-216; these read LLMA…WLFW and LVFL…LLVL. Residue Glu-223 coordinates Zn(2+).

It belongs to the peptidase M48B family. It depends on Zn(2+) as a cofactor.

It is found in the cell membrane. The chain is Protease HtpX homolog 2 from Saccharolobus solfataricus (strain ATCC 35092 / DSM 1617 / JCM 11322 / P2) (Sulfolobus solfataricus).